A 276-amino-acid polypeptide reads, in one-letter code: Ribosomal RNA small subunit methyltransferase A (276 aa).

Residues Asn-27, Leu-29, Gly-54, Glu-75, Asp-101, and Asn-123 each contribute to the S-adenosyl-L-methionine site.

It belongs to the class I-like SAM-binding methyltransferase superfamily. rRNA adenine N(6)-methyltransferase family. RsmA subfamily.

The protein localises to the cytoplasm. The enzyme catalyses adenosine(1518)/adenosine(1519) in 16S rRNA + 4 S-adenosyl-L-methionine = N(6)-dimethyladenosine(1518)/N(6)-dimethyladenosine(1519) in 16S rRNA + 4 S-adenosyl-L-homocysteine + 4 H(+). Specifically dimethylates two adjacent adenosines (A1518 and A1519) in the loop of a conserved hairpin near the 3'-end of 16S rRNA in the 30S particle. May play a critical role in biogenesis of 30S subunits. The chain is Ribosomal RNA small subunit methyltransferase A from Bartonella henselae (strain ATCC 49882 / DSM 28221 / CCUG 30454 / Houston 1) (Rochalimaea henselae).